Consider the following 198-residue polypeptide: Nucleoid occlusion factor SlmA (198 aa).

An HTH tetR-type domain is found at 10–70 (NRREEILQSL…SLIEFIEDSL (61 aa)). The segment at residues 33-52 (TTAKLAASVGVSEAALYRHF) is a DNA-binding region (H-T-H motif). Residues 117-144 (EQDRLQGRINQLFERIEAQLRQVLREKR) are a coiled coil.

It belongs to the nucleoid occlusion factor SlmA family. Homodimer. Interacts with FtsZ.

Its subcellular location is the cytoplasm. The protein resides in the nucleoid. Its function is as follows. Required for nucleoid occlusion (NO) phenomenon, which prevents Z-ring formation and cell division over the nucleoid. Acts as a DNA-associated cell division inhibitor that binds simultaneously chromosomal DNA and FtsZ, and disrupts the assembly of FtsZ polymers. SlmA-DNA-binding sequences (SBS) are dispersed on non-Ter regions of the chromosome, preventing FtsZ polymerization at these regions. This Salmonella agona (strain SL483) protein is Nucleoid occlusion factor SlmA.